A 334-amino-acid chain; its full sequence is 6-phosphogluconolactonase (334 aa).

Belongs to the cycloisomerase 2 family.

It catalyses the reaction 6-phospho-D-glucono-1,5-lactone + H2O = 6-phospho-D-gluconate + H(+). The protein operates within carbohydrate degradation; pentose phosphate pathway; D-ribulose 5-phosphate from D-glucose 6-phosphate (oxidative stage): step 2/3. Functionally, catalyzes the hydrolysis of 6-phosphogluconolactone to 6-phosphogluconate. In Buchnera aphidicola subsp. Acyrthosiphon pisum (strain APS) (Acyrthosiphon pisum symbiotic bacterium), this protein is 6-phosphogluconolactonase.